Consider the following 106-residue polypeptide: ATP-dependent Clp protease adapter protein ClpS (106 aa).

The disordered stretch occupies residues 1-22 (MTDEPNQDDPQGPEVEAAKPSL).

The protein belongs to the ClpS family. Binds to the N-terminal domain of the chaperone ClpA.

Functionally, involved in the modulation of the specificity of the ClpAP-mediated ATP-dependent protein degradation. This Halorhodospira halophila (strain DSM 244 / SL1) (Ectothiorhodospira halophila (strain DSM 244 / SL1)) protein is ATP-dependent Clp protease adapter protein ClpS.